Reading from the N-terminus, the 244-residue chain is 7-cyano-7-deazaguanine synthase (244 aa).

Position 14–24 (14–24 (FSGGQDSATCV)) interacts with ATP. Cys202, Cys217, Cys220, and Cys223 together coordinate Zn(2+).

The protein belongs to the QueC family. Zn(2+) is required as a cofactor.

It catalyses the reaction 7-carboxy-7-deazaguanine + NH4(+) + ATP = 7-cyano-7-deazaguanine + ADP + phosphate + H2O + H(+). Its pathway is purine metabolism; 7-cyano-7-deazaguanine biosynthesis. In terms of biological role, catalyzes the ATP-dependent conversion of 7-carboxy-7-deazaguanine (CDG) to 7-cyano-7-deazaguanine (preQ(0)). The polypeptide is 7-cyano-7-deazaguanine synthase (Burkholderia lata (strain ATCC 17760 / DSM 23089 / LMG 22485 / NCIMB 9086 / R18194 / 383)).